The primary structure comprises 342 residues: Dihydroorotate dehydrogenase (quinone) (342 aa).

FMN is bound by residues 61–65 (AGLDK) and T85. K65 contacts substrate. 110-114 (NRMGF) is a substrate binding site. Residues N138 and N171 each coordinate FMN. Residue N171 coordinates substrate. S174 functions as the Nucleophile in the catalytic mechanism. N176 contributes to the substrate binding site. FMN is bound by residues K216 and T244. 245–246 (NT) contributes to the substrate binding site. FMN is bound by residues G267, G296, and 317–318 (YS).

Belongs to the dihydroorotate dehydrogenase family. Type 2 subfamily. In terms of assembly, monomer. The cofactor is FMN.

The protein resides in the cell membrane. It carries out the reaction (S)-dihydroorotate + a quinone = orotate + a quinol. It participates in pyrimidine metabolism; UMP biosynthesis via de novo pathway; orotate from (S)-dihydroorotate (quinone route): step 1/1. Catalyzes the conversion of dihydroorotate to orotate with quinone as electron acceptor. The polypeptide is Dihydroorotate dehydrogenase (quinone) (Pseudomonas aeruginosa (strain LESB58)).